The following is a 197-amino-acid chain: Carbohydrate-binding domain-containing protein C2E1P3.05c (197 aa).

A signal peptide spans 1–23; sequence MLTQSLFLTVLTLALSLVSKTSA. CBM1 domains are found at residues 25-61 and 68-104; these read QCSPRYGTCGGIYYDGPTCCVVGSSCIYSNPWYSQCI and PCAKLYQQCGGINYNGPTCCEPGSECIYNGPYYSQCI. 4 cysteine pairs are disulfide-bonded: Cys-33/Cys-50, Cys-44/Cys-60, Cys-76/Cys-93, and Cys-87/Cys-103. The interval 115 to 163 is disordered; it reads SSAASSTTSTTSSSSLVSSTTLTSSSPSAVSSTTSIPSISSTISSSVST. Residues Asn-182 and Asn-193 are each glycosylated (N-linked (GlcNAc...) asparagine).

The protein resides in the secreted. This chain is Carbohydrate-binding domain-containing protein C2E1P3.05c, found in Schizosaccharomyces pombe (strain 972 / ATCC 24843) (Fission yeast).